Here is a 545-residue protein sequence, read N- to C-terminus: MATNYIFVTGGVVSSLGKGIAAASLASILEARGLNVTIMKLDPYINVDPGTMSPTQHGEVFVTQDGAETDLDLGHYERFIRSKMSKANNFTSGKIYSEVLRKERRGDYLGATIQVIPHITNEIKARVIEGGKGRDVVIVEVGGTVGDIESLPFLEALRQLAVDVGREKTLFMHLTLVPYIPTAGEVKTKPTQHSVKELLSIGIQPDVLICRSDRTIPANERKKIALFCNVPERAVISLKDVDSIYRIPELLKSQALDSFVCDRFRLECPEADLSEWEQVLYRQANPTGEVTIGMVGKYVELPDAYKSVNEALKHAGLTSRLSVNIKYIDSQDIETKGTELLDGLDAILVPGGFGYRGVEGKIRTAQYARENNIPYLGICLGMQIALIEYARNVAGLTEANSSEFDPACSQPVIGLITEWQDESGNVETRTDKSDLGGTMRLGAQQCHLIEGTKAREIYGAEAIVERHRHRYEVNNVLLPTIEAAGLKVSGVSADRKLVEIIEVPNHPWFIAAQFHPEFTSTPRDGHPLFAGFVAAAKAYQDSRKA.

The tract at residues 1 to 266 (MATNYIFVTG…DSFVCDRFRL (266 aa)) is amidoligase domain. Residue S14 coordinates CTP. S14 serves as a coordination point for UTP. Residues 15–20 (SLGKGI) and D72 contribute to the ATP site. Residues D72 and E140 each coordinate Mg(2+). CTP contacts are provided by residues 147–149 (DIE), 187–192 (KTKPTQ), and K223. Residues 187–192 (KTKPTQ) and K223 each bind UTP. 239–241 (KDV) is a binding site for ATP. Positions 291–542 (TIGMVGKYVE…VAAAKAYQDS (252 aa)) constitute a Glutamine amidotransferase type-1 domain. Residue G352 participates in L-glutamine binding. C379 functions as the Nucleophile; for glutamine hydrolysis in the catalytic mechanism. Residues 380–383 (LGMQ), E403, and R470 contribute to the L-glutamine site. Residues H515 and E517 contribute to the active site.

Belongs to the CTP synthase family. As to quaternary structure, homotetramer.

It catalyses the reaction UTP + L-glutamine + ATP + H2O = CTP + L-glutamate + ADP + phosphate + 2 H(+). It carries out the reaction L-glutamine + H2O = L-glutamate + NH4(+). The enzyme catalyses UTP + NH4(+) + ATP = CTP + ADP + phosphate + 2 H(+). It functions in the pathway pyrimidine metabolism; CTP biosynthesis via de novo pathway; CTP from UDP: step 2/2. Allosterically activated by GTP, when glutamine is the substrate; GTP has no effect on the reaction when ammonia is the substrate. The allosteric effector GTP functions by stabilizing the protein conformation that binds the tetrahedral intermediate(s) formed during glutamine hydrolysis. Inhibited by the product CTP, via allosteric rather than competitive inhibition. In terms of biological role, catalyzes the ATP-dependent amination of UTP to CTP with either L-glutamine or ammonia as the source of nitrogen. Regulates intracellular CTP levels through interactions with the four ribonucleotide triphosphates. This chain is CTP synthase, found in Haemophilus ducreyi (strain 35000HP / ATCC 700724).